We begin with the raw amino-acid sequence, 483 residues long: MLSATKQTFRSLQIRTMSTNTKHYDYLVIGGGSGGVASARRAASYGAKTLLVEAKALGGTCVNVGCVPKKVMWYASDLATRVSHANEYGLYQNLPLDKEHLTFNWPEFKQKRDAYVHRLNGIYQKNLEKEKVDVVFGWARFNKDGNVEVQKRDNTTEVYSANHILVATGGKAIFPENIPGFELGTDSDGFFRLEEQPKKVVVVGAGYIGIELAGVFHGLGSETHLVIRGETVLRKFDECIQNTITDHYVKEGINVHKLSKIVKVEKNVETDKLKIHMNDSKSIDDVDELIWTIGRKSHLGMGSENVGIKLNSHDQIIADEYQNTNVPNIYSLGDVVGKVELTPVAIAAGRKLSNRLFGPEKFRNDKLDYENVPSVIFSHPEAGSIGISEKEAIEKYGKENIKVYNSKFTAMYYAMLSEKSPTRYKIVCAGPNEKVVGLHIVGDSSAEILQGFGVAIKMGATKADFDNCVAIHPTSAEELVTMR.

N-acetylmethionine is present on M1. L2 bears the N-acetylserine mark. Residues S33 and G34 each coordinate FAD. S33 contributes to the glutathione binding site. R40 serves as a coordination point for glutathione. FAD contacts are provided by E53, T60, C61, and K69. C61 and C66 are oxidised to a cystine. Y123 serves as a coordination point for glutathione. A139 contacts FAD. A205, I208, E211, R228, and R234 together coordinate NADP(+). Residue T243 coordinates glutathione. N278 is a glycosylation site (N-linked (GlcNAc...) asparagine). G294 contacts NADP(+). An FAD-binding site is contributed by D334. E340 provides a ligand contact to NADP(+). T342 lines the FAD pocket. Position 350 (R350) interacts with glutathione. An NADP(+)-binding site is contributed by V375. Residue K425 participates in glutathione binding. H472 contacts FAD. The Proton acceptor role is filled by H472.

It belongs to the class-I pyridine nucleotide-disulfide oxidoreductase family. In terms of assembly, homodimer. FAD is required as a cofactor.

The protein resides in the cytoplasm. Its subcellular location is the nucleus. It is found in the mitochondrion. It localises to the peroxisome. The catalysed reaction is 2 glutathione + NADP(+) = glutathione disulfide + NADPH + H(+). Catalyzes the reduction of glutathione disulfide (GSSG) to reduced glutathione (GSH). Constitutes the major mechanism to maintain a high GSH:GSSG ratio in the cytosol. This Saccharomyces cerevisiae (strain ATCC 204508 / S288c) (Baker's yeast) protein is Glutathione reductase.